The sequence spans 346 residues: tRNA N6-adenosine threonylcarbamoyltransferase (346 aa).

Residues His-111 and His-115 each coordinate Fe cation. Substrate is bound by residues 134–138 (LVSGG), Asp-167, Gly-180, Asp-184, and Asn-280. Asp-308 is a binding site for Fe cation.

This sequence belongs to the KAE1 / TsaD family. Fe(2+) serves as cofactor.

Its subcellular location is the cytoplasm. The catalysed reaction is L-threonylcarbamoyladenylate + adenosine(37) in tRNA = N(6)-L-threonylcarbamoyladenosine(37) in tRNA + AMP + H(+). Required for the formation of a threonylcarbamoyl group on adenosine at position 37 (t(6)A37) in tRNAs that read codons beginning with adenine. Is involved in the transfer of the threonylcarbamoyl moiety of threonylcarbamoyl-AMP (TC-AMP) to the N6 group of A37, together with TsaE and TsaB. TsaD likely plays a direct catalytic role in this reaction. This chain is tRNA N6-adenosine threonylcarbamoyltransferase, found in Crocosphaera subtropica (strain ATCC 51142 / BH68) (Cyanothece sp. (strain ATCC 51142)).